The sequence spans 336 residues: Ribose-phosphate pyrophosphokinase 1 (336 aa).

Mg(2+)-binding residues include aspartate 150, histidine 152, aspartate 161, and aspartate 165. The binding of phosphoribosylpyrophosphate stretch occupies residues 236–251 (GKVAVMVDDMIDTAGT).

Belongs to the ribose-phosphate pyrophosphokinase family.

It catalyses the reaction D-ribose 5-phosphate + ATP = 5-phospho-alpha-D-ribose 1-diphosphate + AMP + H(+). In Spinacia oleracea (Spinach), this protein is Ribose-phosphate pyrophosphokinase 1 (PRS1).